The following is an 868-amino-acid chain: Monofunctional pimaradiene synthase (868 aa).

Residues Asp620, Asp624, Asn764, Thr768, and Glu772 each contribute to the Mg(2+) site.

The protein belongs to the terpene synthase family. Tpsd subfamily. It depends on Mg(2+) as a cofactor.

It catalyses the reaction (+)-copalyl diphosphate = (-)-pimara-8(14),15-diene + diphosphate. It participates in terpene metabolism; oleoresin biosynthesis. In terms of biological role, involved in defensive oleoresin formation in conifers in response to insect attack or other injury. Involved in diterpene (C20) olefins biosynthesis. Monofunctional enzyme lacking the DXDD motif in the class II active site relevant for the cyclization of geranylgeranyl diphosphate (GGPP). Requires (+)-copalyl diphosphate ((+)-CPP) as substrate, but no activity with GGPP or ent-CPP. Pimaradiene is the major products of the enzyme. The protein is Monofunctional pimaradiene synthase of Pinus contorta (Shore pine).